Here is a 457-residue protein sequence, read N- to C-terminus: Bifunctional protein GlmU (457 aa).

The tract at residues 1–228 is pyrophosphorylase; sequence MEGLVTLILA…SEEITGVNSR (228 aa). Residues 9-12, Lys23, Gln73, and 78-79 each bind UDP-N-acetyl-alpha-D-glucosamine; these read LAAG and GT. Residue Asp102 coordinates Mg(2+). Residues Gly139, Glu154, Asn169, and Asn226 each contribute to the UDP-N-acetyl-alpha-D-glucosamine site. Asn226 contacts Mg(2+). The segment at 229–249 is linker; sequence VQLFEAEKIMRKRINYRHMEN. Positions 250-457 are N-acetyltransferase; that stretch reads GVTIVDPDTT…VQERIKKGRL (208 aa). UDP-N-acetyl-alpha-D-glucosamine contacts are provided by Arg331 and Lys349. His361 acts as the Proton acceptor in catalysis. Positions 364 and 375 each coordinate UDP-N-acetyl-alpha-D-glucosamine. Acetyl-CoA contacts are provided by residues 384-385, Ala421, and Arg438; that span reads NY.

In the N-terminal section; belongs to the N-acetylglucosamine-1-phosphate uridyltransferase family. The protein in the C-terminal section; belongs to the transferase hexapeptide repeat family. In terms of assembly, homotrimer. Mg(2+) serves as cofactor.

The protein resides in the cytoplasm. It catalyses the reaction alpha-D-glucosamine 1-phosphate + acetyl-CoA = N-acetyl-alpha-D-glucosamine 1-phosphate + CoA + H(+). It carries out the reaction N-acetyl-alpha-D-glucosamine 1-phosphate + UTP + H(+) = UDP-N-acetyl-alpha-D-glucosamine + diphosphate. The protein operates within nucleotide-sugar biosynthesis; UDP-N-acetyl-alpha-D-glucosamine biosynthesis; N-acetyl-alpha-D-glucosamine 1-phosphate from alpha-D-glucosamine 6-phosphate (route II): step 2/2. It functions in the pathway nucleotide-sugar biosynthesis; UDP-N-acetyl-alpha-D-glucosamine biosynthesis; UDP-N-acetyl-alpha-D-glucosamine from N-acetyl-alpha-D-glucosamine 1-phosphate: step 1/1. It participates in bacterial outer membrane biogenesis; LPS lipid A biosynthesis. Functionally, catalyzes the last two sequential reactions in the de novo biosynthetic pathway for UDP-N-acetylglucosamine (UDP-GlcNAc). The C-terminal domain catalyzes the transfer of acetyl group from acetyl coenzyme A to glucosamine-1-phosphate (GlcN-1-P) to produce N-acetylglucosamine-1-phosphate (GlcNAc-1-P), which is converted into UDP-GlcNAc by the transfer of uridine 5-monophosphate (from uridine 5-triphosphate), a reaction catalyzed by the N-terminal domain. The protein is Bifunctional protein GlmU of Thermoanaerobacter pseudethanolicus (strain ATCC 33223 / 39E) (Clostridium thermohydrosulfuricum).